The chain runs to 131 residues: Single-stranded DNA-binding protein 2 (131 aa).

An SSB domain is found at 1-103 (MYNKVIMIGR…VLASSFQLLE (103 aa)). An Important for interaction with partner proteins motif is present at residues 126-131 (EEELPF).

As to quaternary structure, homotetramer.

Its function is as follows. Plays an important role in DNA replication, recombination and repair. Binds to ssDNA and to an array of partner proteins to recruit them to their sites of action during DNA metabolism. This Streptococcus agalactiae serotype III (strain NEM316) protein is Single-stranded DNA-binding protein 2 (ssb2).